The chain runs to 248 residues: 4-hydroxy-tetrahydrodipicolinate reductase (248 aa).

Position 28 (Asp28) interacts with NAD(+). Residue Lys29 coordinates NADP(+). NAD(+)-binding positions include 78–80 and 102–105; these read ATT and SYNM. His134 (proton donor/acceptor) is an active-site residue. (S)-2,3,4,5-tetrahydrodipicolinate is bound at residue His135. Lys138 serves as the catalytic Proton donor. 144-145 is a binding site for (S)-2,3,4,5-tetrahydrodipicolinate; it reads GT.

This sequence belongs to the DapB family.

The protein localises to the cytoplasm. It carries out the reaction (S)-2,3,4,5-tetrahydrodipicolinate + NAD(+) + H2O = (2S,4S)-4-hydroxy-2,3,4,5-tetrahydrodipicolinate + NADH + H(+). The catalysed reaction is (S)-2,3,4,5-tetrahydrodipicolinate + NADP(+) + H2O = (2S,4S)-4-hydroxy-2,3,4,5-tetrahydrodipicolinate + NADPH + H(+). It participates in amino-acid biosynthesis; L-lysine biosynthesis via DAP pathway; (S)-tetrahydrodipicolinate from L-aspartate: step 4/4. Its function is as follows. Catalyzes the conversion of 4-hydroxy-tetrahydrodipicolinate (HTPA) to tetrahydrodipicolinate. In Exiguobacterium sibiricum (strain DSM 17290 / CCUG 55495 / CIP 109462 / JCM 13490 / 255-15), this protein is 4-hydroxy-tetrahydrodipicolinate reductase.